We begin with the raw amino-acid sequence, 302 residues long: MEEYKLSHLKELEAESIHIIREVAAEFENPVMLYSIGKDSSVMVRLAEKAFYPGKVPFPLMHIDSKWKFKEMIQFRDEYAKKHGWNLIVESNMEAFHAGVGPFTHGSKVHTDLMKTQALLHALDKYKFDAAFGGARRDEEKSRAKERIFSFRDKFHQWDPKNQRPELWDIYNARVHKGESIRVFPISNWTELDIWQYIRLENIPIVPLYYAKERPVINLDGNIIMADDDRLPEKYRDQIEMKMVRFRTLGCWPLTGAVESGAATIEEIVEEMMTTTKSERTTRVIDFDQEGSMEQKKREGYF.

This sequence belongs to the PAPS reductase family. CysD subfamily. In terms of assembly, heterodimer composed of CysD, the smaller subunit, and CysN.

The catalysed reaction is sulfate + ATP + H(+) = adenosine 5'-phosphosulfate + diphosphate. It functions in the pathway sulfur metabolism; hydrogen sulfide biosynthesis; sulfite from sulfate: step 1/3. Functionally, with CysN forms the ATP sulfurylase (ATPS) that catalyzes the adenylation of sulfate producing adenosine 5'-phosphosulfate (APS) and diphosphate, the first enzymatic step in sulfur assimilation pathway. APS synthesis involves the formation of a high-energy phosphoric-sulfuric acid anhydride bond driven by GTP hydrolysis by CysN coupled to ATP hydrolysis by CysD. This Bacteroides thetaiotaomicron (strain ATCC 29148 / DSM 2079 / JCM 5827 / CCUG 10774 / NCTC 10582 / VPI-5482 / E50) protein is Sulfate adenylyltransferase subunit 2.